Here is a 273-residue protein sequence, read N- to C-terminus: Putative phosphoenolpyruvate synthase regulatory protein (273 aa).

Gly-153–Thr-160 provides a ligand contact to ADP.

Belongs to the pyruvate, phosphate/water dikinase regulatory protein family. PSRP subfamily.

The catalysed reaction is [pyruvate, water dikinase] + ADP = [pyruvate, water dikinase]-phosphate + AMP + H(+). It carries out the reaction [pyruvate, water dikinase]-phosphate + phosphate + H(+) = [pyruvate, water dikinase] + diphosphate. Functionally, bifunctional serine/threonine kinase and phosphorylase involved in the regulation of the phosphoenolpyruvate synthase (PEPS) by catalyzing its phosphorylation/dephosphorylation. In Yersinia pseudotuberculosis serotype I (strain IP32953), this protein is Putative phosphoenolpyruvate synthase regulatory protein.